The chain runs to 223 residues: Guanylate kinase (223 aa).

The region spanning 6-183 (GRLFVMTGAS…AVADFLAILT (178 aa)) is the Guanylate kinase-like domain. 13-20 (GASGVGKG) contacts ATP.

It belongs to the guanylate kinase family.

The protein resides in the cytoplasm. The catalysed reaction is GMP + ATP = GDP + ADP. Essential for recycling GMP and indirectly, cGMP. The protein is Guanylate kinase of Thermus thermophilus (strain ATCC 27634 / DSM 579 / HB8).